Consider the following 316-residue polypeptide: 33 kDa chaperonin (316 aa).

2 disulfides stabilise this stretch: cysteine 239/cysteine 241 and cysteine 272/cysteine 275.

This sequence belongs to the HSP33 family. Post-translationally, under oxidizing conditions two disulfide bonds are formed involving the reactive cysteines. Under reducing conditions zinc is bound to the reactive cysteines and the protein is inactive.

The protein localises to the cytoplasm. Functionally, redox regulated molecular chaperone. Protects both thermally unfolding and oxidatively damaged proteins from irreversible aggregation. Plays an important role in the bacterial defense system toward oxidative stress. In Clostridium perfringens (strain SM101 / Type A), this protein is 33 kDa chaperonin.